Consider the following 240-residue polypeptide: Homeobox-leucine zipper protein HOX14 (240 aa).

Residues 26–64 (SGEVQGERPRARRRRRRGARCVGGGGGGGEVDGGDPKKR) form a disordered region. Over residues 35-44 (RARRRRRRGA) the composition is skewed to basic residues. Gly residues predominate over residues 46–56 (CVGGGGGGGEV). The segment at residues 59-118 (GDPKKRRLSDEQVEMLELSFREERKLETGRKVHLASELGLDPKQVAVWFQNRRARHKSKL) is a DNA-binding region (homeobox). Residues 108–167 (QNRRARHKSKLLEEEFSKLKHAHDAAILHKCHLENEVLRLKERLVVAEEEVRRLRSAAGS) adopt a coiled-coil conformation.

Belongs to the HD-ZIP homeobox family. Class I subfamily. In terms of tissue distribution, expressed in roots, stems, leaf blades and panicles.

The protein resides in the nucleus. Its function is as follows. Probable transcription factor. This chain is Homeobox-leucine zipper protein HOX14 (HOX14), found in Oryza sativa subsp. japonica (Rice).